We begin with the raw amino-acid sequence, 118 residues long: Putative pterin-4-alpha-carbinolamine dehydratase (118 aa).

Belongs to the pterin-4-alpha-carbinolamine dehydratase family.

It carries out the reaction (4aS,6R)-4a-hydroxy-L-erythro-5,6,7,8-tetrahydrobiopterin = (6R)-L-erythro-6,7-dihydrobiopterin + H2O. This is Putative pterin-4-alpha-carbinolamine dehydratase from Pseudomonas fluorescens (strain SBW25).